Consider the following 230-residue polypeptide: Urease accessory protein UreE (230 aa).

A compositionally biased stretch (basic residues) spans histidine 200–threonine 210. Positions histidine 200–histidine 230 are disordered. Residues histidine 211–histidine 230 are compositionally biased toward basic and acidic residues.

It belongs to the UreE family.

Its subcellular location is the cytoplasm. Its function is as follows. Involved in urease metallocenter assembly. Binds nickel. Probably functions as a nickel donor during metallocenter assembly. In Yersinia enterocolitica serotype O:8 / biotype 1B (strain NCTC 13174 / 8081), this protein is Urease accessory protein UreE.